A 397-amino-acid polypeptide reads, in one-letter code: Ornithine aminotransferase (397 aa).

K255 carries the N6-(pyridoxal phosphate)lysine modification.

Belongs to the class-III pyridoxal-phosphate-dependent aminotransferase family. OAT subfamily. Pyridoxal 5'-phosphate serves as cofactor.

The protein resides in the cytoplasm. It catalyses the reaction a 2-oxocarboxylate + L-ornithine = L-glutamate 5-semialdehyde + an L-alpha-amino acid. Its pathway is amino-acid biosynthesis; L-proline biosynthesis; L-glutamate 5-semialdehyde from L-ornithine: step 1/1. Its function is as follows. Catalyzes the interconversion of ornithine to glutamate semialdehyde. The protein is Ornithine aminotransferase of Macrococcus caseolyticus (strain JCSC5402) (Macrococcoides caseolyticum).